The primary structure comprises 182 residues: ADP-ribosylation factor-like protein 3 (182 aa).

G2 carries the N-myristoyl glycine lipid modification. At S5 the chain carries Phosphoserine. GTP contacts are provided by residues 24-31, T48, 67-71, G70, 126-129, and 159-161; these read GLDNAGKT, DIGGQ, NKQD, and SAL. Residues T31 and T48 each contribute to the Mg(2+) site.

It belongs to the small GTPase superfamily. Arf family. In terms of assembly, found in a complex with ARL3, RP2 and UNC119 (or UNC119B); RP2 induces hydrolysis of GTP ARL3 in the complex, leading to the release of UNC119 (or UNC119B). Interacts with RP2; interaction is direct and stimulated with the activated GTP-bound form of ARL3. Interacts with SYS1. Interacts with ARL2BP; the GTP-bound form interacts with ARL2BP. Microtubule-associated protein. Does not interact with TBCC. Interacts with RP2. Interacts with PDE6D; the interaction occurs specifically with the GTP-bound form of ARL3. Interacts with GGA1; the interaction recruits PKD1:PKD2 complex to trans-Golgi network and is required for ciliary targeting of PKD1:PKD2 complex. Interacts with DNAAF9.

The protein resides in the golgi apparatus membrane. It is found in the cytoplasm. The protein localises to the cytoskeleton. Its subcellular location is the spindle. It localises to the nucleus. The protein resides in the microtubule organizing center. It is found in the centrosome. The protein localises to the cell projection. Its subcellular location is the cilium. Its function is as follows. Small GTP-binding protein which cycles between an inactive GDP-bound and an active GTP-bound form, and the rate of cycling is regulated by guanine nucleotide exchange factors (GEF) and GTPase-activating proteins (GAP). Required for normal cytokinesis and cilia signaling. Required for targeting proteins to the cilium, including myristoylated NPHP3 and prenylated INPP5E. Targets NPHP3 to the ciliary membrane by releasing myristoylated NPHP3 from UNC119B cargo adapter into the cilium. Requires assistance from GTPase-activating proteins (GAPs) like RP2 and PDE6D, in order to cycle between inactive GDP-bound and active GTP-bound forms. Required for PKD1:PKD2 complex targeting from the trans-Golgi network to the cilium. The chain is ADP-ribosylation factor-like protein 3 from Mus musculus (Mouse).